The following is a 1192-amino-acid chain: Probable inactive serine/threonine-protein kinase DDB_G0280131 (1192 aa).

Disordered regions lie at residues 23–90 (STIN…NLNE), 144–189 (DSSI…SQQD), 201–236 (VSISLPPPPTTEELPLPPPSTEELQLPPPPPTTTTA), 301–406 (SIPT…FKDS), and 478–499 (DLDDDITNKNNDNNSNGNNNNK). Residues 26-43 (NLNNNNSNNNNNNNNNGN) are compositionally biased toward low complexity. Polar residues predominate over residues 44–60 (SATKISFQEQMPNGNGN). 2 stretches are compositionally biased toward low complexity: residues 61 to 73 (SSTTTTTAAQQSA) and 154 to 175 (SSYLSKNLSPPSNPSNIISNNN). Pro residues predominate over residues 201–232 (VSISLPPPPTTEELPLPPPSTEELQLPPPPPT). The span at 301–324 (SIPTPIVTPSTTTSTNTTTAATVN) shows a compositional bias: low complexity. Residues 325–338 (KLNASKSPNGTLTT) are compositionally biased toward polar residues. Residues 362-376 (PTLSSPSPSQSAAPQ) are compositionally biased toward low complexity. A compositionally biased stretch (pro residues) spans 377–391 (PAAPQPTPTSQPQPP). Composition is skewed to low complexity over residues 392 to 402 (TTTVSTPVSPT) and 485 to 498 (NKNNDNNSNGNNNN). The region spanning 521–783 (AQPSDIIGSG…ILKILRQPLH (263 aa)) is the Protein kinase domain. ATP-binding positions include 527-535 (IGSGNNGTT) and lysine 549. Residues 790–831 (KPTQQQQQQQQQDQQQQQPEQQLTSSTSSTSTQDSLVSQEQV) form a disordered region. Positions 791 to 828 (PTQQQQQQQQQDQQQQQPEQQLTSSTSSTSTQDSLVSQ) are enriched in low complexity.

Belongs to the protein kinase superfamily. TKL Ser/Thr protein kinase family.

In Dictyostelium discoideum (Social amoeba), this protein is Probable inactive serine/threonine-protein kinase DDB_G0280131.